We begin with the raw amino-acid sequence, 353 residues long: Holliday junction branch migration complex subunit RuvB (353 aa).

Residues 4-186 (ADRLIAATHS…FGIVQRLEFY (183 aa)) are large ATPase domain (RuvB-L). ATP is bound by residues Ile25, Arg26, Gly67, Lys70, Thr71, Thr72, 133–135 (EDF), Arg176, Tyr186, and Arg223. Thr71 lines the Mg(2+) pocket. The tract at residues 187-257 (STADLATIVS…VADLALNLLD (71 aa)) is small ATPAse domain (RuvB-S). A head domain (RuvB-H) region spans residues 260 to 353 (EHGFDHQDRR…VDEFLDAVDD (94 aa)). Positions 296, 315, and 320 each coordinate DNA.

Belongs to the RuvB family. In terms of assembly, homohexamer. Forms an RuvA(8)-RuvB(12)-Holliday junction (HJ) complex. HJ DNA is sandwiched between 2 RuvA tetramers; dsDNA enters through RuvA and exits via RuvB. An RuvB hexamer assembles on each DNA strand where it exits the tetramer. Each RuvB hexamer is contacted by two RuvA subunits (via domain III) on 2 adjacent RuvB subunits; this complex drives branch migration. In the full resolvosome a probable DNA-RuvA(4)-RuvB(12)-RuvC(2) complex forms which resolves the HJ.

It localises to the cytoplasm. It carries out the reaction ATP + H2O = ADP + phosphate + H(+). Its function is as follows. The RuvA-RuvB-RuvC complex processes Holliday junction (HJ) DNA during genetic recombination and DNA repair, while the RuvA-RuvB complex plays an important role in the rescue of blocked DNA replication forks via replication fork reversal (RFR). RuvA specifically binds to HJ cruciform DNA, conferring on it an open structure. The RuvB hexamer acts as an ATP-dependent pump, pulling dsDNA into and through the RuvAB complex. RuvB forms 2 homohexamers on either side of HJ DNA bound by 1 or 2 RuvA tetramers; 4 subunits per hexamer contact DNA at a time. Coordinated motions by a converter formed by DNA-disengaged RuvB subunits stimulates ATP hydrolysis and nucleotide exchange. Immobilization of the converter enables RuvB to convert the ATP-contained energy into a lever motion, pulling 2 nucleotides of DNA out of the RuvA tetramer per ATP hydrolyzed, thus driving DNA branch migration. The RuvB motors rotate together with the DNA substrate, which together with the progressing nucleotide cycle form the mechanistic basis for DNA recombination by continuous HJ branch migration. Branch migration allows RuvC to scan DNA until it finds its consensus sequence, where it cleaves and resolves cruciform DNA. This is Holliday junction branch migration complex subunit RuvB from Pseudomonas fluorescens (strain Pf0-1).